The chain runs to 148 residues: Ubiquitin-conjugating enzyme E2 28 (148 aa).

A UBC core domain is found at 1 to 147; the sequence is MASKRILKEL…ARSWTQKYAM (147 aa). Cys-85 functions as the Glycyl thioester intermediate in the catalytic mechanism.

The protein belongs to the ubiquitin-conjugating enzyme family. As to quaternary structure, interacts with SINAT5. In terms of tissue distribution, expressed in seeds, pistils, siliques, hypocotyls and leaves.

It carries out the reaction S-ubiquitinyl-[E1 ubiquitin-activating enzyme]-L-cysteine + [E2 ubiquitin-conjugating enzyme]-L-cysteine = [E1 ubiquitin-activating enzyme]-L-cysteine + S-ubiquitinyl-[E2 ubiquitin-conjugating enzyme]-L-cysteine.. It participates in protein modification; protein ubiquitination. Functionally, accepts the ubiquitin from the E1 complex and catalyzes its covalent attachment to other proteins. This is Ubiquitin-conjugating enzyme E2 28 from Arabidopsis thaliana (Mouse-ear cress).